Reading from the N-terminus, the 490-residue chain is Bifunctional protein HldE (490 aa).

Residues 1 to 330 (MFSFDALLQA…RRILPHASLA (330 aa)) form a ribokinase region. 205 to 208 (NRKE) is a binding site for ATP. Asp275 is an active-site residue. The interval 358–490 (FTNGCFDILH…LVARAREGQS (133 aa)) is cytidylyltransferase.

The protein in the N-terminal section; belongs to the carbohydrate kinase PfkB family. In the C-terminal section; belongs to the cytidylyltransferase family. In terms of assembly, homodimer.

It catalyses the reaction D-glycero-beta-D-manno-heptose 7-phosphate + ATP = D-glycero-beta-D-manno-heptose 1,7-bisphosphate + ADP + H(+). It carries out the reaction D-glycero-beta-D-manno-heptose 1-phosphate + ATP + H(+) = ADP-D-glycero-beta-D-manno-heptose + diphosphate. The protein operates within nucleotide-sugar biosynthesis; ADP-L-glycero-beta-D-manno-heptose biosynthesis; ADP-L-glycero-beta-D-manno-heptose from D-glycero-beta-D-manno-heptose 7-phosphate: step 1/4. Its pathway is nucleotide-sugar biosynthesis; ADP-L-glycero-beta-D-manno-heptose biosynthesis; ADP-L-glycero-beta-D-manno-heptose from D-glycero-beta-D-manno-heptose 7-phosphate: step 3/4. In terms of biological role, catalyzes the phosphorylation of D-glycero-D-manno-heptose 7-phosphate at the C-1 position to selectively form D-glycero-beta-D-manno-heptose-1,7-bisphosphate. Catalyzes the ADP transfer from ATP to D-glycero-beta-D-manno-heptose 1-phosphate, yielding ADP-D-glycero-beta-D-manno-heptose. This is Bifunctional protein HldE from Rhodopseudomonas palustris (strain ATCC BAA-98 / CGA009).